A 258-amino-acid chain; its full sequence is Trans-aconitate 2-methyltransferase (258 aa).

Belongs to the methyltransferase superfamily. Tam family.

Its subcellular location is the cytoplasm. It carries out the reaction trans-aconitate + S-adenosyl-L-methionine = (E)-3-(methoxycarbonyl)pent-2-enedioate + S-adenosyl-L-homocysteine. Functionally, catalyzes the S-adenosylmethionine monomethyl esterification of trans-aconitate. This chain is Trans-aconitate 2-methyltransferase, found in Acidovorax sp. (strain JS42).